The chain runs to 126 residues: Histone H2B 3 (126 aa).

Positions methionine 1 to lysine 12 are enriched in low complexity. Residues methionine 1–arginine 34 are disordered. An N6-acetyllysine mark is found at lysine 6 and lysine 13. Residues lysine 13 to arginine 34 are compositionally biased toward basic residues. A Phosphoserine modification is found at serine 15. N6-acetyllysine occurs at positions 16 and 21. Serine 113 carries an O-linked (GlcNAc) serine glycan. Lysine 121 participates in a covalent cross-link: Glycyl lysine isopeptide (Lys-Gly) (interchain with G-Cter in ubiquitin).

It belongs to the histone H2B family. In terms of assembly, the nucleosome is a histone octamer containing two molecules each of H2A, H2B, H3 and H4 assembled in one H3-H4 heterotetramer and two H2A-H2B heterodimers. The octamer wraps approximately 147 bp of DNA. Post-translationally, monoubiquitination of Lys-121 by the BRE1 gives a specific tag for epigenetic transcriptional activation and is also prerequisite for histone H3 'Lys-4' and 'Lys-79' methylation. In terms of processing, phosphorylated on Ser-15 during apoptosis; which facilitates apoptotic chromatin condensation. GlcNAcylation at Ser-113 promotes monoubiquitination of Lys-121. It fluctuates in response to extracellular glucose, and associates with transcribed genes.

The protein resides in the nucleus. It localises to the chromosome. Core component of nucleosome. Nucleosomes wrap and compact DNA into chromatin, limiting DNA accessibility to the cellular machineries which require DNA as a template. Histones thereby play a central role in transcription regulation, DNA repair, DNA replication and chromosomal stability. DNA accessibility is regulated via a complex set of post-translational modifications of histones, also called histone code, and nucleosome remodeling. This chain is Histone H2B 3 (hist2h2l), found in Danio rerio (Zebrafish).